Reading from the N-terminus, the 249-residue chain is Tumor necrosis factor ligand superfamily member 12 (249 aa).

At 1-21 (MAARRSQRRRGRRGEPGTALL) the chain is on the cytoplasmic side. Residues 22–42 (VPLALGLGLALACLGLLLAVV) traverse the membrane as a helical; Signal-anchor for type II membrane protein segment. At 43–249 (SLGSRASLSA…LTYFGLFQVH (207 aa)) the chain is on the extracellular side. Residues 55 to 85 (PAQEELVAEEDQDPSELNPQTEESQDPAPFL) form a disordered region. Acidic residues predominate over residues 56–68 (AQEELVAEEDQDP). A THD domain is found at 107–248 (IAAHYEVHPR…FLTYFGLFQV (142 aa)). An N-linked (GlcNAc...) asparagine glycan is attached at Asn-139. An intrachain disulfide couples Cys-191 to Cys-210.

The protein belongs to the tumor necrosis factor family. Homotrimer. Interacts with the angiogenic factor AGGF1/VG5Q. The soluble form derives from the membrane form by proteolytic processing. As to expression, highly expressed in adult heart, pancreas, skeletal muscle, brain, colon, small intestine, lung, ovary, prostate, spleen, lymph node, appendix and peripheral blood lymphocytes. Low expression in kidney, testis, liver, placenta, thymus and bone marrow. Also detected in fetal kidney, liver, lung and brain.

The protein localises to the cell membrane. It is found in the secreted. Binds to FN14 and possibly also to TNRFSF12/APO3. Weak inducer of apoptosis in some cell types. Mediates NF-kappa-B activation. Promotes angiogenesis and the proliferation of endothelial cells. Also involved in induction of inflammatory cytokines. Promotes IL8 secretion. In Homo sapiens (Human), this protein is Tumor necrosis factor ligand superfamily member 12 (TNFSF12).